Consider the following 341-residue polypeptide: DNA-directed RNA polymerase subunit alpha (341 aa).

An alpha N-terminal domain (alpha-NTD) region spans residues 1–237 (MLSLSKNWNA…EQLQLFISFE (237 aa)). The tract at residues 252-341 (FSPYLLKRVD…LSKRYEDSYN (90 aa)) is alpha C-terminal domain (alpha-CTD).

Belongs to the RNA polymerase alpha chain family. As to quaternary structure, homodimer. The RNAP catalytic core consists of 2 alpha, 1 beta, 1 beta' and 1 omega subunit. When a sigma factor is associated with the core the holoenzyme is formed, which can initiate transcription.

It catalyses the reaction RNA(n) + a ribonucleoside 5'-triphosphate = RNA(n+1) + diphosphate. Functionally, DNA-dependent RNA polymerase catalyzes the transcription of DNA into RNA using the four ribonucleoside triphosphates as substrates. The sequence is that of DNA-directed RNA polymerase subunit alpha from Rickettsia bellii (strain OSU 85-389).